A 381-amino-acid chain; its full sequence is Chaperone protein DnaJ (381 aa).

Residues 5–70 (DFYEVLGVSR…QKKAAYDQYG (66 aa)) form the J domain. The CR-type zinc-finger motif lies at 136-214 (GVSKEIEVPT…CHGQGRKQKT (79 aa)). Cys149, Cys152, Cys166, Cys169, Cys188, Cys191, Cys202, and Cys205 together coordinate Zn(2+). CXXCXGXG motif repeat units follow at residues 149 to 156 (CDICDGSG), 166 to 173 (CGTCHGHG), 188 to 195 (CPTCNGKG), and 202 to 209 (CNSCHGQG).

It belongs to the DnaJ family. In terms of assembly, homodimer. The cofactor is Zn(2+).

Its subcellular location is the cytoplasm. Functionally, participates actively in the response to hyperosmotic and heat shock by preventing the aggregation of stress-denatured proteins and by disaggregating proteins, also in an autonomous, DnaK-independent fashion. Unfolded proteins bind initially to DnaJ; upon interaction with the DnaJ-bound protein, DnaK hydrolyzes its bound ATP, resulting in the formation of a stable complex. GrpE releases ADP from DnaK; ATP binding to DnaK triggers the release of the substrate protein, thus completing the reaction cycle. Several rounds of ATP-dependent interactions between DnaJ, DnaK and GrpE are required for fully efficient folding. Also involved, together with DnaK and GrpE, in the DNA replication of plasmids through activation of initiation proteins. This Vibrio atlanticus (strain LGP32) (Vibrio splendidus (strain Mel32)) protein is Chaperone protein DnaJ.